The sequence spans 215 residues: Cytochrome b6 (215 aa).

Residues 32 to 52 (IFYCLGGITFTSFLVQVATGF) form a helical membrane-spanning segment. Cys35 contacts heme c. Residues His86 and His100 each contribute to the heme b site. 3 helical membrane passes run 90–110 (ASMM…TGGF), 116–136 (LTWV…VTGY), and 186–206 (LHTF…FLMI). 2 residues coordinate heme b: His187 and His202.

It belongs to the cytochrome b family. PetB subfamily. As to quaternary structure, the 4 large subunits of the cytochrome b6-f complex are cytochrome b6, subunit IV (17 kDa polypeptide, PetD), cytochrome f and the Rieske protein, while the 4 small subunits are PetG, PetL, PetM and PetN. The complex functions as a dimer. Heme b is required as a cofactor. Requires heme c as cofactor.

It is found in the plastid. The protein resides in the chloroplast thylakoid membrane. In terms of biological role, component of the cytochrome b6-f complex, which mediates electron transfer between photosystem II (PSII) and photosystem I (PSI), cyclic electron flow around PSI, and state transitions. The protein is Cytochrome b6 of Oltmannsiellopsis viridis (Marine flagellate).